The chain runs to 153 residues: uncharacterized protein (153 aa).

A signal peptide spans 1–19 (MKACLLLFFYFSFICQLHG).

This is an uncharacterized protein from Escherichia coli (strain K12).